Consider the following 250-residue polypeptide: NAD(P)H-quinone oxidoreductase subunit K (250 aa).

[4Fe-4S] cluster is bound by residues Cys63, Cys64, Cys128, and Cys159.

This sequence belongs to the complex I 20 kDa subunit family. As to quaternary structure, NDH-1 can be composed of about 15 different subunits; different subcomplexes with different compositions have been identified which probably have different functions. [4Fe-4S] cluster is required as a cofactor.

The protein localises to the cellular thylakoid membrane. The enzyme catalyses a plastoquinone + NADH + (n+1) H(+)(in) = a plastoquinol + NAD(+) + n H(+)(out). The catalysed reaction is a plastoquinone + NADPH + (n+1) H(+)(in) = a plastoquinol + NADP(+) + n H(+)(out). Its function is as follows. NDH-1 shuttles electrons from an unknown electron donor, via FMN and iron-sulfur (Fe-S) centers, to quinones in the respiratory and/or the photosynthetic chain. The immediate electron acceptor for the enzyme in this species is believed to be plastoquinone. Couples the redox reaction to proton translocation, and thus conserves the redox energy in a proton gradient. Cyanobacterial NDH-1 also plays a role in inorganic carbon-concentration. The polypeptide is NAD(P)H-quinone oxidoreductase subunit K (Rippkaea orientalis (strain PCC 8801 / RF-1) (Cyanothece sp. (strain PCC 8801))).